The primary structure comprises 651 residues: MSITPADLSPASSSDHREKLQELLTAVRDLHDTALQELQAKIAKLKKERCLDAQKLSEFHSKNQHLREQQKIQQEKIRQLEDRLRSGPCDRCTVKEKQIKKTNTELEDNNQRNLSVISELEAERKTLTDENRRLSLELERLRRSGSPQNTSSEAEEGMIPDSPLRPLSLPVASKMKRRKEQNHVRYTETPLSLSHPESRQREQSVAFGCNGKGVLVAETCEMDATSVAERDNKRHFRIVVPETCRPDVYPEQVDDVDDDDLHIPSHTEQNQKPELRDCTNILIAGQNDDSPLILRCRPLASQDHQSSIDDVLRTPANSSTCVLTKGKRKHSNGAKKDREISDCRLDADETDIKGIIFASTPANGRLQSKNQETSEIETTQDSKKKCLDGHTPRKSLVQNHHAPFPYDQSWSVDPGADLGQYDTESSPQPEHQARTDLETLDTDCTFVSHSLLLRGQKTTGQSQTTGIGQKANDSLADIFDKTGYGEYESCPQDDSIDLKQDSVYEEEREEDDPEEKPEAAVVFRRPADRKPLVSDSDKSSRNKSFACVEVVRKKDERRKLKGHYCKECEVYYADLPEEEREKKLTSCSRHRYRYIPPSTPENFWEVGFPSTQTCVERGYIKEDEQPDVRIRRRRPYLAMFSPKAKSQKKKH.

Coiled coils occupy residues 35–84 (LQEL…EDRL) and 117–138 (ISELEAERKTLTDENRRLSLEL). 3 disordered regions span residues 138–199 (LERL…PESR), 363–433 (NGRL…EHQA), and 487–539 (YESC…SDKS). Over residues 363-379 (NGRLQSKNQETSEIETT) the composition is skewed to polar residues. Basic and acidic residues predominate over residues 380–391 (QDSKKKCLDGHT). Residues 503–515 (VYEEEREEDDPEE) are compositionally biased toward acidic residues. The segment covering 525-539 (RPADRKPLVSDSDKS) has biased composition (basic and acidic residues). A phosphothreonine mark is found at threonine 599 and threonine 611.

The protein belongs to the COM1/SAE2/CtIP family. As to quaternary structure, homotetramer; formed by antiparallel association of helical extensions protruding from the N-termini of two parallel coiled-coil dimers. Interacts with the MRN complex; the interaction links DNA sensing to resection. Interacts with samhd1. Post-translationally, phosphorylation at Thr-599 and Thr-611 promote interaction with nbn and recruitment to double-strand breaks (DSBs).

Its subcellular location is the nucleus. It localises to the chromosome. Functionally, endonuclease that cooperates with the MRE11-RAD50-NBN (MRN) complex in DNA-end resection, the first step of double-strand break (DSB) repair through the homologous recombination (HR) pathway. Functions downstream of the MRN complex and ATM, promotes ATR activation and its recruitment to DSBs in the S/G2 phase facilitating the generation of ssDNA. Specifically promotes the endonuclease activity of the MRN complex to clear DNA ends containing protein adducts: recruited to DSBs by nbn following phosphorylation, and promotes the endonuclease of mre11 to clear protein-DNA adducts and generate clean double-strand break ends. The protein is DNA endonuclease RBBP8 (rbbp8) of Danio rerio (Zebrafish).